A 225-amino-acid polypeptide reads, in one-letter code: MLQHYSVSWKKGLAALCLLAVAGLSGCDQQENAAAKVEYDGLSNSQPLRVDANNHTVTMLVQINGRFLTDDTRHGIVFKDGSNGHKSLFMGYATPKAFYEALKEAGGTPGENMTMDNKETTHVTGSKLDISVNWQGAAKAYSFDEVIVDSNGKKLDMRFGGNLTAAEEKKTGCLVCLDSCPVGIVSNATYTYGAVEKRGEVKFKGNASVLPADNTLATVTFKIAE.

The first 22 residues, 1–22 (MLQHYSVSWKKGLAALCLLAVA), serve as a signal peptide directing secretion. Residues 161–190 (GNLTAAEEKKTGCLVCLDSCPVGIVSNATY) form the 4Fe-4S ferredoxin-type domain.

This is an uncharacterized protein from Escherichia coli (strain K12).